Reading from the N-terminus, the 105-residue chain is Large ribosomal subunit protein bL21 (105 aa).

It belongs to the bacterial ribosomal protein bL21 family. Part of the 50S ribosomal subunit. Contacts protein L20.

Its function is as follows. This protein binds to 23S rRNA in the presence of protein L20. The polypeptide is Large ribosomal subunit protein bL21 (Dictyoglomus turgidum (strain DSM 6724 / Z-1310)).